A 299-amino-acid chain; its full sequence is MKGRSALLRALWIAALSFGLGGVAVAAEPTAKAAPYENLMVPSPSMGRDIPVAFLAGGPHAVYLLDAFNAGPDVSNWVTAGNAMNTLAGKGISVVAPAGGAYSMYTNWEQDGSKQWDTFLSAELPDWLAANRGLAPGGHAAVGAAQGGYGAMALAAFHPDRFGFAGSMSGFLYPSNTTTNGAIAAGMQQFGGVDTNGMWGAPQLGRWKWHDPWVHASLLAQNNTRVWVWSPTNPGASDPAAMIGQAAEAMGNSRMFYNQYRSVGGHNGHFDFPASGDNGWGSWAPQLGAMSGDIVGAIR.

A signal peptide spans 1–26 (MKGRSALLRALWIAALSFGLGGVAVA).

It belongs to the mycobacterial A85 antigen family. In terms of assembly, homodimer.

The protein resides in the secreted. Functionally, may have a role in host tissue attachment, whereby ligands may include the serum protein fibronectin and small sugars. This is MPT51/MPB51 antigen (mpt51) from Mycobacterium bovis (strain ATCC BAA-935 / AF2122/97).